The chain runs to 338 residues: Fructose-1,6-bisphosphatase class 1 (338 aa).

Residues Glu90, Asp112, Leu114, and Asp115 each contribute to the Mg(2+) site. Substrate is bound by residues 115–118 (DGSS), Asn207, and Lys273. Glu279 provides a ligand contact to Mg(2+).

This sequence belongs to the FBPase class 1 family. In terms of assembly, homotetramer. Requires Mg(2+) as cofactor.

The protein localises to the cytoplasm. The enzyme catalyses beta-D-fructose 1,6-bisphosphate + H2O = beta-D-fructose 6-phosphate + phosphate. It participates in carbohydrate biosynthesis; gluconeogenesis. The chain is Fructose-1,6-bisphosphatase class 1 from Xanthomonas campestris pv. campestris (strain 8004).